The chain runs to 475 residues: Pup--protein ligase (475 aa).

E19 provides a ligand contact to Mg(2+). An ATP-binding site is contributed by R64. Y66 contributes to the Mg(2+) binding site. D68 functions as the Proton acceptor in the catalytic mechanism. E74 lines the Mg(2+) pocket. T77 and W436 together coordinate ATP.

It belongs to the Pup ligase/Pup deamidase family. Pup-conjugating enzyme subfamily.

It catalyses the reaction ATP + [prokaryotic ubiquitin-like protein]-L-glutamate + [protein]-L-lysine = ADP + phosphate + N(6)-([prokaryotic ubiquitin-like protein]-gamma-L-glutamyl)-[protein]-L-lysine.. It functions in the pathway protein degradation; proteasomal Pup-dependent pathway. It participates in protein modification; protein pupylation. Catalyzes the covalent attachment of the prokaryotic ubiquitin-like protein modifier Pup to the proteasomal substrate proteins, thereby targeting them for proteasomal degradation. This tagging system is termed pupylation. The ligation reaction involves the side-chain carboxylate of the C-terminal glutamate of Pup and the side-chain amino group of a substrate lysine. This chain is Pup--protein ligase, found in Corynebacterium aurimucosum (strain ATCC 700975 / DSM 44827 / CIP 107346 / CN-1) (Corynebacterium nigricans).